The sequence spans 366 residues: Alanine racemase (366 aa).

The Proton acceptor; specific for D-alanine role is filled by K40. K40 is modified (N6-(pyridoxal phosphate)lysine). R136 is a substrate binding site. Catalysis depends on Y263, which acts as the Proton acceptor; specific for L-alanine. M310 serves as a coordination point for substrate.

The protein belongs to the alanine racemase family. Pyridoxal 5'-phosphate is required as a cofactor.

It carries out the reaction L-alanine = D-alanine. The protein operates within amino-acid biosynthesis; D-alanine biosynthesis; D-alanine from L-alanine: step 1/1. Catalyzes the interconversion of L-alanine and D-alanine. May also act on other amino acids. This chain is Alanine racemase (alr), found in Streptococcus pyogenes serotype M28 (strain MGAS6180).